We begin with the raw amino-acid sequence, 1335 residues long: MESEMLQSPLMGLGEEDEADLTDWNLPLAFMKKRHCEKIEGSKSLAQSWRMKDRMKTVSVALVLCLNVGVDPPDVVKTTPCARLECWIDPLSMGPQKALETIGANLQKQYENWQPRARYKQSLDPTVDEVKKLCTSLRRNAKEERVLFHYNGHGVPRPTVNGEVWVFNKNYTQYIPLSIYDLQTWMGSPSIFVYDCSNAGLIVKSFKQFALQREQELEVAAINPNHPLAQMPLPPSMKNCIQLAACEAHELLPMIPDLPADLFTSCLTTPIKIALRWFCMQKCVSLVPGVTLDLIEKIPGRLNDRRTPLGELNWIFTAITDTIAWNVLPRDLFQKLFRQDLLVASLFRNFLLAERIMRSYNCTPVSSPRLPPTYMHAMWQAWDLAVDICLSQLPTIIEEGTAFRHSPFFAEQLTAFQVWLTMGVENRSPPEQLPIVLQVLLSQVHRLRALDLLGRFLDLGPWAVSLALSVGIFPYVLKLLQSSARELRPLLVFIWAKILAVDSSCQADLVKDNGHKYFLSVLADPYMPAEHRTMTAFILAVIVNSYTTGQEACLQGNLIAICLEQLSDPHPLLRQWVAICLGRIWQNFDSARWCGVRDSAHEKLYSLLSDPIPEVRCAAVFALGTFVGNSAERTDHSTTIDHNVAMMLAQLINDGSPMVRKELVVALSHLVVQYESNFCTVALQFMEEEKNYPLPSPAATEGGSLTPVRDSPCTPRLRSVSSYGNIRAVTTARNLNKSLQNLSLTEESGSSVAFSPGNLSTSSSASSTLGSPENEEYILSFETIDKMRRVSSYSALNSLIGVSFNSVYTQIWRVLLHLAADPYPDVSDLAMKVLNSIAYKATVNARPQRILDTSSLTQSAPASPTNKGMHMHQVGGSPPASSTSSCSLTNDVAKQTVSRDLPSSRPGTAGPTGAQYTPHSHQFPRTRKMFDKGPDQTTDDADDAAGHKSFICASMQTGFCDWSARYFAQAVMKIPEEHDLESQIRKEREWRFLRNTRVRKQAQQVIQKGITRLDDQIFLNRNPGVPSVVKFHPFTPCIAVADKDSICFWDWEKGEKLDYFHNGNPRYTRVTAMEYLNGQDCSLLLTATDDGAIRVWKNFADLEKNPEMVTAWQGLSDMLPTTRGAGMVVDWEQETGLLMSSGDVRIVRIWDTDRETKVQDIPTGADSCVTSLSCDSHRSLIVAGLGDGSIRVYDRRMALSECRVMTYREHTAWVVKAYLQKHPEGHIVSVSVNGDVRFFDPRMPESVNVMQIVKGLTALDIHPQANLIACGSMNQFTAIYNGNGELINNIKYYDGFMGQRVGAISCLAFHPHWPHLAVGSNDYYISVYSVEKRVR.

2 positions are modified to phosphoserine: Ser44 and Ser122. A Phosphoserine; by MAPK8 modification is found at Ser696. O-linked (GlcNAc) threonine glycosylation is present at Thr700. Thr706 carries the post-translational modification Phosphothreonine; by MAPK8. Ser719 and Ser721 each carry phosphoserine; by RPS6KA1. Ser722 is modified (phosphoserine; by AMPK and RPS6KA1). Residue Ser738 is modified to Phosphoserine. Positions Gly749–Ser771 are disordered. Residues Ser755–Ser771 are compositionally biased toward low complexity. Ser791 is subject to Phosphoserine. Position 792 is a phosphoserine; by AMPK (Ser792). Phosphoserine is present on residues Ser836 and Ser855. Over residues Thr853–Asn866 the composition is skewed to polar residues. Residues Thr853–Asp942 are disordered. Residue Ser859 is modified to Phosphoserine; by MTOR. Ser863 bears the Phosphoserine; by MAPK8, MTOR and NLK mark. Thr865 carries the phosphothreonine modification. Phosphoserine is present on Ser877. Residues Ser877–Ser887 show a composition bias toward low complexity. Residues Leu888 to Ser898 are compositionally biased toward polar residues. Residues Lys932 and Lys948 each participate in a glycyl lysine isopeptide (Lys-Gly) (interchain with G-Cter in ubiquitin) cross-link. Ser982 carries the phosphoserine modification. 7 WD repeats span residues Asn1020–His1061, Pro1065–Pro1106, Thr1121–Asp1160, Gly1164–Arg1203, Glu1209–Val1249, Gln1251–Lys1291, and Gln1299–Arg1335. The residue at position 1097 (Lys1097) is an N6-acetyllysine.

It belongs to the WD repeat RAPTOR family. Part of the mechanistic target of rapamycin complex 1 (mTORC1) which contains MTOR, MLST8 and RPTOR. mTORC1 associates with AKT1S1/PRAS40, which inhibits its activity. mTORC1 associates with DEPTOR, which regulates its activity. mTORC1 binds to and is inhibited by FKBP12-rapamycin. Forms a complex with MTOR under both leucine-rich and -poor conditions. Interacts with (via TOS motifs) EIF4EBP1 and RPS6KB1; interaction is independent of its association with MTOR. Binds preferentially to poorly or non-phosphorylated forms of EIF4EBP1, and this binding is critical to the ability of MTOR to catalyze phosphorylation. Interacts with ULK1 in a nutrient-dependent manner; the interaction is reduced during starvation. Interacts with GTP-bound form of RagA/RRAGA or RagB/RRAGB and GDP-bound form of RagC/RRAGC or RagD/RRAGD, promoting recruitment of mTORC1 to the lysosomes. Interacts (when phosphorylated by AMPK) with 14-3-3 protein, leading to inhibition of its activity. Interacts with SPAG5; SPAG5 competes with MTOR for RPTOR-binding, resulting in decreased mTORC1 formation. Interacts with WAC; WAC positively regulates MTOR activity by promoting the assembly of the TTT complex composed of TELO2, TTI1 and TTI2 and the RUVBL complex composed of RUVBL1 and RUVBL2 into the TTT-RUVBL complex which leads to the dimerization of the mTORC1 complex and its subsequent activation. Interacts with G3BP1. The complex formed with G3BP1 and SPAG5 is increased by oxidative stress. Interacts with HTR6. Interacts with PIH1D1. Interacts with LARP1. Interacts with BRAT1. Interacts with SIK3. Interacts with SLC38A7; this interaction mediates the recruitment of mTORC1 to the lysosome and its subsequent activation. Insulin-stimulated phosphorylation at Ser-863 by MTOR and MAPK8 regulates mTORC1 activity. Phosphorylated at Ser-863 by NLK in response to stress, disrupting the interaction with small GTPases Rag (RagA/RRAGA, RagB/RRAGB, RagC/RRAGC and/or RagD/RRAGD), thereby preventing lysosome recruitment and activation of the mTORC1 complex. Osmotic stress also induces phosphorylation at Ser-696, Thr-706 and Ser-863 by MAPK8. Ser-863 phosphorylation is required for phosphorylation at Ser-855 and Ser-859. In response to nutrient limitation, phosphorylated at Ser-722 and Ser-792 by AMPK; phosphorylation promotes interaction with 14-3-3 proteins, leading to negative regulation of the mTORC1 complex. Phosphorylation at Ser-722 and Ser-792 by AMPK in response to glucose starvation inhibits O-GlcNAcylation by OGT and subsequent activation of mTORC1. In response to growth factors, phosphorylated at Ser-719, Ser-721 and Ser-722 by RPS6KA1, which stimulates mTORC1 activity. Phosphorylation at Ser-791 by PKA downstream of cAMP inhibits the mTORC1 complex. Phosphorylated at Ser-877 by TBK1, leading to negative regulation of the mTORC1 complex. In terms of processing, O-GlcNAcylated by OGT upon glucose sufficiency, promoting interaction with small GTPases Rag (RagA/RRAGA, RagB/RRAGB, RagC/RRAGC and/or RagD/RRAGD) and subsequent recruitment of mTORC1 to lysosomal membranes, leading to activation of the mTORC1 complex. Phosphorylation at Ser-722 and Ser-792 by AMPK in response to glucose starvation inhibits O-GlcNAcylation. Post-translationally, acetylation at Lys-1097 by EP300/p300 in response to leucine metabolite acetyl-coA promotes its activity, leading to activation of the mTORC1 complex. Acetylation is decreased in response to fasting. Phosphorylated at Ser-877 by TBK1, leading to negative regulation of the mTORC1 complex. Ubiquitinated, leading to its degradation by the proteasome. Deubiquitinated by OTUB1 via a non-catalytic mechanism. Ubiquitinated by an E3 ubiquitin ligase complex containing VHL.

It localises to the cytoplasm. The protein localises to the lysosome. Its subcellular location is the cytoplasmic granule. Functionally, component of the mechanistic target of rapamycin complex 1 (mTORC1), an evolutionarily conserved central nutrient sensor that stimulates anabolic reactions and macromolecule biosynthesis to promote cellular biomass generation and growth. In response to nutrients, growth factors or amino acids, mTORC1 is recruited to the lysosome membrane and promotes protein, lipid and nucleotide synthesis by phosphorylating several substrates, such as ribosomal protein S6 kinase (RPS6KB1 and RPS6KB2) and EIF4EBP1 (4E-BP1). In the same time, it inhibits catabolic pathways by phosphorylating the autophagy initiation components ULK1 and ATG13, as well as transcription factor TFEB, a master regulators of lysosomal biogenesis and autophagy. The mTORC1 complex is inhibited in response to starvation and amino acid depletion. Within the mTORC1 complex, RPTOR acts both as a molecular adapter, which (1) mediates recruitment of mTORC1 to lysosomal membranes via interaction with small GTPases Rag (RagA/RRAGA, RagB/RRAGB, RagC/RRAGC and/or RagD/RRAGD), and a (2) substrate-specific adapter, which promotes substrate specificity by binding to TOS motif-containing proteins and direct them towards the active site of the MTOR kinase domain for phosphorylation. mTORC1 complex regulates many cellular processes, such as odontoblast and osteoclast differentiation or neuronal transmission. mTORC1 complex in excitatory neuronal transmission is required for the prosocial behavior induced by the psychoactive substance lysergic acid diethylamide (LSD). The chain is Regulatory-associated protein of mTOR from Mus musculus (Mouse).